The chain runs to 496 residues: Lysine--tRNA ligase (496 aa).

Glu-409 and Glu-416 together coordinate Mg(2+).

The protein belongs to the class-II aminoacyl-tRNA synthetase family. Homodimer. Requires Mg(2+) as cofactor.

It localises to the cytoplasm. The catalysed reaction is tRNA(Lys) + L-lysine + ATP = L-lysyl-tRNA(Lys) + AMP + diphosphate. This Streptococcus pneumoniae serotype 19F (strain G54) protein is Lysine--tRNA ligase.